We begin with the raw amino-acid sequence, 236 residues long: Ubiquinone biosynthesis O-methyltransferase (236 aa).

Residues Arg39, Gly59, Asp80, and Met124 each coordinate S-adenosyl-L-methionine.

The protein belongs to the methyltransferase superfamily. UbiG/COQ3 family.

It carries out the reaction a 3-demethylubiquinol + S-adenosyl-L-methionine = a ubiquinol + S-adenosyl-L-homocysteine + H(+). The enzyme catalyses a 3-(all-trans-polyprenyl)benzene-1,2-diol + S-adenosyl-L-methionine = a 2-methoxy-6-(all-trans-polyprenyl)phenol + S-adenosyl-L-homocysteine + H(+). The protein operates within cofactor biosynthesis; ubiquinone biosynthesis. In terms of biological role, O-methyltransferase that catalyzes the 2 O-methylation steps in the ubiquinone biosynthetic pathway. The protein is Ubiquinone biosynthesis O-methyltransferase of Shewanella pealeana (strain ATCC 700345 / ANG-SQ1).